A 291-amino-acid chain; its full sequence is Light-independent protochlorophyllide reductase iron-sulfur ATP-binding protein (291 aa).

ATP contacts are provided by residues 10–15 and K39; that span reads GIGKST. Position 14 (S14) interacts with Mg(2+). [4Fe-4S] cluster-binding residues include C95 and C129. 180-181 serves as a coordination point for ATP; sequence NR.

The protein belongs to the NifH/BchL/ChlL family. In terms of assembly, homodimer. Protochlorophyllide reductase is composed of three subunits; ChlL, ChlN and ChlB. [4Fe-4S] cluster serves as cofactor.

The protein localises to the plastid. Its subcellular location is the chloroplast. The enzyme catalyses chlorophyllide a + oxidized 2[4Fe-4S]-[ferredoxin] + 2 ADP + 2 phosphate = protochlorophyllide a + reduced 2[4Fe-4S]-[ferredoxin] + 2 ATP + 2 H2O. It participates in porphyrin-containing compound metabolism; chlorophyll biosynthesis (light-independent). Functionally, component of the dark-operative protochlorophyllide reductase (DPOR) that uses Mg-ATP and reduced ferredoxin to reduce ring D of protochlorophyllide (Pchlide) to form chlorophyllide a (Chlide). This reaction is light-independent. The L component serves as a unique electron donor to the NB-component of the complex, and binds Mg-ATP. In Pinus contorta (Shore pine), this protein is Light-independent protochlorophyllide reductase iron-sulfur ATP-binding protein.